The primary structure comprises 477 residues: MKILFVAAEGAPFSKTGGLGDVIGALPKSLVKAGHEVAVILPYYDMVEAKFGSQIEDVLHFEVSVGWRRQYCGIKKTVLNGVTFYFIDNQYYFFRGHVYGDFDDGERFAFFQLAAIEAMERIDFIPDLLHVHDYHTAMIPFLLKEKYRWIQAYEDIETVLTIHNLEFQGQFSEGMLGDLFGVGFERYADGTLRWNNCLNWMKAGILYANRVSTVSPSYAHEIMTSQFGCNLDQILKMESGKVSGIVNGIDADLYNPQTDALLDYHFNQEDLSGKAKNKAKLQERVGLPVRADVPLVGIVSRLTRQKGFDVVVESLHHILQEDVQIVLLGTGDPAFEGAFSWFAQIYPDKLSTNITFDVKLAQEIYAACDLFLMPSRFEPCGLSQMMAMRYGTLPLVHEVGGLRDTVRAFNPIEGSGTGFSFDNLSPYWLNWTFQTALDLYRNHPDIWRNLQKQAMESDFSWDTACKSYLDLYHSLVN.

Residue Lys-15 coordinates ADP-alpha-D-glucose.

It belongs to the glycosyltransferase 1 family. Bacterial/plant glycogen synthase subfamily.

It carries out the reaction [(1-&gt;4)-alpha-D-glucosyl](n) + ADP-alpha-D-glucose = [(1-&gt;4)-alpha-D-glucosyl](n+1) + ADP + H(+). It participates in glycan biosynthesis; glycogen biosynthesis. In terms of biological role, synthesizes alpha-1,4-glucan chains using ADP-glucose. This Streptococcus pneumoniae (strain 70585) protein is Glycogen synthase.